A 299-amino-acid chain; its full sequence is Zinc-alpha-2-glycoprotein (299 aa).

An N-terminal signal peptide occupies residues 1-17 (MVPVLLALLLLLGPAVS). Asn24, Asn125, and Asn256 each carry an N-linked (GlcNAc...) asparagine glycan. 2 disulfide bridges follow: Cys120-Cys183 and Cys222-Cys277. The Ig-like C1-type domain maps to 204-289 (PSVSVTGHAA…EHRSLTRPLT (86 aa)).

The protein belongs to the MHC class I family. Interacts with PIP.

The protein resides in the secreted. Functionally, stimulates lipid degradation in adipocytes and causes the extensive fat losses associated with some advanced cancers. The chain is Zinc-alpha-2-glycoprotein (AZGP1) from Bos taurus (Bovine).